The sequence spans 184 residues: MTSPYLIVGLGNLGPEYTKTRHNIGYMAIDELLTRTSPMPATLTVHKKTNTLVAETRLGTQKVIVAKPRAFMNVTGPSVRKLADFFTVDRNRIVVLYDDLDLEFGAIKFRHGGGDHGHNGLKSITQALGTKDYIRGGIGIGRPPGRMAPKSFVLKPFSKIEQSELPIVCADAADEVEKITTSEL.

TRNA is bound at residue Y17. Catalysis depends on H22, which acts as the Proton acceptor. F71, N73, and N119 together coordinate tRNA.

The protein belongs to the PTH family. Monomer.

It is found in the cytoplasm. The catalysed reaction is an N-acyl-L-alpha-aminoacyl-tRNA + H2O = an N-acyl-L-amino acid + a tRNA + H(+). Hydrolyzes ribosome-free peptidyl-tRNAs (with 1 or more amino acids incorporated), which drop off the ribosome during protein synthesis, or as a result of ribosome stalling. Its function is as follows. Catalyzes the release of premature peptidyl moieties from peptidyl-tRNA molecules trapped in stalled 50S ribosomal subunits, and thus maintains levels of free tRNAs and 50S ribosomes. The sequence is that of Peptidyl-tRNA hydrolase from Corynebacterium diphtheriae (strain ATCC 700971 / NCTC 13129 / Biotype gravis).